The chain runs to 76 residues: Translational regulator CsrA (76 aa).

Belongs to the CsrA/RsmA family. In terms of assembly, homodimer; the beta-strands of each monomer intercalate to form a hydrophobic core, while the alpha-helices form wings that extend away from the core.

Its subcellular location is the cytoplasm. Functionally, a translational regulator that binds mRNA to regulate translation initiation and/or mRNA stability. Usually binds in the 5'-UTR at or near the Shine-Dalgarno sequence preventing ribosome-binding, thus repressing translation. Its main target seems to be the major flagellin gene, while its function is anatagonized by FliW. The chain is Translational regulator CsrA from Helicobacter pylori (strain P12).